The sequence spans 135 residues: Probable 5-hydroxyisourate hydrolase R09H10.3 (135 aa).

An N-terminal signal peptide occupies residues 1 to 20 (MNKFSLFFALTATLMTITES). The substrate site is built by His-30, Arg-68, and Tyr-132.

It belongs to the transthyretin family. 5-hydroxyisourate hydrolase subfamily. In terms of assembly, homotetramer.

The enzyme catalyses 5-hydroxyisourate + H2O = 5-hydroxy-2-oxo-4-ureido-2,5-dihydro-1H-imidazole-5-carboxylate + H(+). Functionally, catalyzes the hydrolysis of 5-hydroxyisourate (HIU) to 2-oxo-4-hydroxy-4-carboxy-5-ureidoimidazoline (OHCU). The polypeptide is Probable 5-hydroxyisourate hydrolase R09H10.3 (Caenorhabditis elegans).